The following is a 161-amino-acid chain: Periplasmic chaperone Spy (161 aa).

Residues 1–23 (MRKLTALFVASTLALGAANLAHA) form the signal peptide. Positions 140–161 (ANFEKRLTERPAAKGKMPATAE) are disordered. A compositionally biased stretch (basic and acidic residues) spans 142–151 (FEKRLTERPA).

This sequence belongs to the CpxP/Spy family. Homodimer.

The protein resides in the periplasm. In terms of biological role, an ATP-independent periplasmic chaperone, decreases protein aggregation and helps protein refolding. Binds substrate over a large region of its convex inner surface. Substrate protein folds while it is bound to chaperone. Increasing Spy flexibility increases its substrate affinity and overall chaperone activity (shown for 3 different substrates). Protects proteins in vitro against tannin inactivation; tannins have antimicrobial activity. Overexpression enhances the stability of otherwise unstable periplasmic proteins. The sequence is that of Periplasmic chaperone Spy from Escherichia coli (strain K12).